Reading from the N-terminus, the 207-residue chain is Probable isochorismatase (207 aa).

It belongs to the isochorismatase family.

The enzyme catalyses isochorismate + H2O = (2S,3S)-2,3-dihydroxy-2,3-dihydrobenzoate + pyruvate. The protein operates within antibiotic biosynthesis; phenazine biosynthesis. Its function is as follows. Involved in the biosynthesis of the antibiotic phenazine, a nitrogen-containing heterocyclic molecule having important roles in virulence, competition and biological control. This isochorismatase may remove pyruvate from chorismate during the formation of the phenazine ring structure and/or stabilize the phenazine biosynthetic complex. This is Probable isochorismatase (phzA) from Pseudomonas chlororaphis (Pseudomonas aureofaciens).